We begin with the raw amino-acid sequence, 48 residues long: Small, acid-soluble spore protein P (48 aa).

Over residues 1 to 19 (MTNKNTGKDIRQNSPKEHQ) the composition is skewed to basic and acidic residues. Residues 1–48 (MTNKNTGKDIRQNSPKEHQSGQPEPLSGSKKVKNRNHTRQKHNSHHDM) form a disordered region. Positions 30 to 48 (KKVKNRNHTRQKHNSHHDM) are enriched in basic residues.

Belongs to the SspP family.

The protein localises to the spore core. This Bacillus pumilus (strain SAFR-032) protein is Small, acid-soluble spore protein P.